The following is a 465-amino-acid chain: MLPLVALVGRPNVGKSTLFNALTLTRDALVHDQPGVTRDRHYGVCRIDGQPLFAVVDTGGMVGKEDGLAGATARQARLAAAEADVVLFVVNVREGASALDDDILAWLRKLSQPTLLVINKIDGVSDTTVHSEFAHYGFSDVVPVSAAHRQGLDDLIEQVLAWLPERSIGEALNEDSERIHIAFVGRPNVGKSTLVNRLLGEERMIVSDVPGTTRDSITVDLERDEFRYRLVDTAGLRRKSKVEEAVEKFSAFKTLQAIEQCQVAVLLLDAGEGVTDQDATVLAAILDAGKALVVAMNKWDGLATYQREQAEDLLSRKLGFVNWAEVVRLSAKHGSGLRELFRAIHRAHVSALRQFSTSEVNKALEIAYQTAPPPSIRGYVSKLRYVHPAGSNPPTFIVHGTRLKVLPDTYKRYLENFFRKRFKLVGTPVRFLFREGDNPYEGKKNVLSERQIQRRRRLMRHVKRK.

EngA-type G domains lie at 3–167 and 179–352; these read PLVA…PERS and IHIA…VSAL. GTP-binding positions include 9-16, 57-61, 119-122, 185-192, 232-236, and 297-300; these read GRPNVGKS, DTGGM, NKID, DTAGL, and NKWD. Residues 353-437 form the KH-like domain; that stretch reads RQFSTSEVNK…PVRFLFREGD (85 aa).

It belongs to the TRAFAC class TrmE-Era-EngA-EngB-Septin-like GTPase superfamily. EngA (Der) GTPase family. Associates with the 50S ribosomal subunit.

GTPase that plays an essential role in the late steps of ribosome biogenesis. The sequence is that of GTPase Der from Xylella fastidiosa (strain M12).